Consider the following 442-residue polypeptide: Putative major teichoic acid biosynthesis protein C (442 aa).

Its function is as follows. Unknown. Might be involved in poly(glycerol phosphate) teichoic acid biosynthesis. The sequence is that of Putative major teichoic acid biosynthesis protein C (tagC) from Bacillus subtilis (strain 168).